The chain runs to 744 residues: Phosphoribosylformylglycinamidine synthase subunit PurL (744 aa).

The active site involves His50. ATP is bound by residues Tyr53 and Lys92. Glu94 lines the Mg(2+) pocket. Residues 95-98 (SHNH) and Arg117 contribute to the substrate site. His96 functions as the Proton acceptor in the catalytic mechanism. Residue Asp118 participates in Mg(2+) binding. Position 241 (Gln241) interacts with substrate. Asp269 is a binding site for Mg(2+). 313–315 (ESQ) provides a ligand contact to substrate. The ATP site is built by Asp494 and Gly531. Position 532 (Asn532) interacts with Mg(2+). Residue Ser534 coordinates substrate.

It belongs to the FGAMS family. As to quaternary structure, monomer. Part of the FGAM synthase complex composed of 1 PurL, 1 PurQ and 2 PurS subunits.

It localises to the cytoplasm. It catalyses the reaction N(2)-formyl-N(1)-(5-phospho-beta-D-ribosyl)glycinamide + L-glutamine + ATP + H2O = 2-formamido-N(1)-(5-O-phospho-beta-D-ribosyl)acetamidine + L-glutamate + ADP + phosphate + H(+). The protein operates within purine metabolism; IMP biosynthesis via de novo pathway; 5-amino-1-(5-phospho-D-ribosyl)imidazole from N(2)-formyl-N(1)-(5-phospho-D-ribosyl)glycinamide: step 1/2. Part of the phosphoribosylformylglycinamidine synthase complex involved in the purines biosynthetic pathway. Catalyzes the ATP-dependent conversion of formylglycinamide ribonucleotide (FGAR) and glutamine to yield formylglycinamidine ribonucleotide (FGAM) and glutamate. The FGAM synthase complex is composed of three subunits. PurQ produces an ammonia molecule by converting glutamine to glutamate. PurL transfers the ammonia molecule to FGAR to form FGAM in an ATP-dependent manner. PurS interacts with PurQ and PurL and is thought to assist in the transfer of the ammonia molecule from PurQ to PurL. The polypeptide is Phosphoribosylformylglycinamidine synthase subunit PurL (Chelativorans sp. (strain BNC1)).